A 614-amino-acid chain; its full sequence is Vitamin B12 transporter BtuB (614 aa).

The first 20 residues, 1–20, serve as a signal peptide directing secretion; it reads MIKKASLLTACSVTAFSAWA. The short motif at 26–33 is the TonB box element; that stretch reads DTLVVTAN. Residues 38-152 form the TBDR plug domain; sequence PRSTVLAPTT…IGGVVNIITT (115 aa). Cyanocob(III)alamin contacts are provided by residues leucine 83, serine 85, asparagine 92, and 110 to 111; that span reads VS. In terms of domain architecture, TBDR beta-barrel spans 155 to 614; sequence EPGTEISAGW…EYTLSGSYTF (460 aa). Beta stranded transmembrane passes span 158 to 165, 169 to 178, and 184 to 195; these read TEISAGWG, YQNYDVSTQQ, and TRVTLLGDYAHT. Residues aspartate 199, glutamine 211, aspartate 213, and aspartate 215 each contribute to the Ca(2+) site. The next 2 membrane-spanning stretches (beta stranded) occupy residues 217-227 and 232-248; these read FLSKTLYGALE and DAWSGFVRGYGYDNRTN. Ca(2+) is bound by residues tyrosine 249 and aspartate 250. Alanine 251 contributes to the cyanocob(III)alamin binding site. Aspartate 261 contributes to the Ca(2+) binding site. 14 beta stranded membrane passes run 263-277, 279-296, 309-325, 328-337, 353-369, 371-381, 385-400, 403-417, 434-443, 449-458, 473-490, 494-509, 517-529, and 535-550; these read RKLYSQSWDAGLRYN, ELIKSQLITSYSHSKDYN, TLDEMKQYTVQWANNVI, HGSIGAGVDW, YDQRNTGIYLTGLQQVG, FTFEGAARNDD, FGRHGTWQTSAGWEFI, YRFIASYGTSYKAPN, KSKQWEGAFE, VNWRISGYRN, YYNEGKARIKGVEATANF, PLTHTVSYDYVDARNA, RRAKQQVKYQLDW, and DWGITYQYLGTRYDKD. Residue threonine 309 participates in cyanocob(III)alamin binding. Arginine 517 contacts cyanocob(III)alamin. Cyanocob(III)alamin is bound at residue tyrosine 551. The next 3 membrane-spanning stretches (beta stranded) occupy residues 558–572, 585–596, and 602–614; these read TVKMGGVSLWDLAVA, IANLFDKDYETV, and AGREYTLSGSYTF. The TonB C-terminal box motif lies at 597–614; that stretch reads YGYQTAGREYTLSGSYTF.

It belongs to the TonB-dependent receptor family. BtuB (TC 1.B.14.3.1) subfamily.

It localises to the cell outer membrane. Involved in the active translocation of vitamin B12 (cyanocobalamin) across the outer membrane to the periplasmic space. It derives its energy for transport by interacting with the trans-periplasmic membrane protein TonB. The protein is Vitamin B12 transporter BtuB of Escherichia coli O139:H28 (strain E24377A / ETEC).